A 78-amino-acid polypeptide reads, in one-letter code: Leukemia-associated protein 1 (78 aa).

In terms of biological role, may act as a tumor suppressor. The chain is Leukemia-associated protein 1 (DLEU1) from Homo sapiens (Human).